A 1160-amino-acid polypeptide reads, in one-letter code: Nck-associated protein 1 homolog (1160 aa).

The protein belongs to the HEM-1/HEM-2 family. As to quaternary structure, part of a Scar/WAVE complex containing brk1, scrA, abiA, pirA and napA.

Its function is as follows. Involved in regulation of actin and microtubule organization. Involved in cell adhesion. In Dictyostelium discoideum (Social amoeba), this protein is Nck-associated protein 1 homolog (napA).